The following is a 269-amino-acid chain: Thiazole synthase (269 aa).

The active-site Schiff-base intermediate with DXP is lysine 109. 1-deoxy-D-xylulose 5-phosphate contacts are provided by residues glycine 170, 196–197 (AG), and 218–219 (NT).

Belongs to the ThiG family. In terms of assembly, homotetramer. Forms heterodimers with either ThiH or ThiS.

The protein localises to the plastid. Its subcellular location is the chloroplast. It carries out the reaction [ThiS sulfur-carrier protein]-C-terminal-Gly-aminoethanethioate + 2-iminoacetate + 1-deoxy-D-xylulose 5-phosphate = [ThiS sulfur-carrier protein]-C-terminal Gly-Gly + 2-[(2R,5Z)-2-carboxy-4-methylthiazol-5(2H)-ylidene]ethyl phosphate + 2 H2O + H(+). It participates in cofactor biosynthesis; thiamine diphosphate biosynthesis. Its function is as follows. Catalyzes the rearrangement of 1-deoxy-D-xylulose 5-phosphate (DXP) to produce the thiazole phosphate moiety of thiamine. Sulfur is provided by the thiocarboxylate moiety of the carrier protein ThiS. In vitro, sulfur can be provided by H(2)S. This chain is Thiazole synthase, found in Thalassiosira pseudonana (Marine diatom).